The chain runs to 253 residues: Putative B3 domain-containing protein Os03g0619850 (253 aa).

A DNA-binding region (TF-B3) is located at residues 26-119 (MSCFLIRMTT…CFEVMILDSD (94 aa)). Disordered regions lie at residues 126-150 (LKSN…AGPP) and 230-253 (HRDA…EQDS). Over residues 230–239 (HRDADQERQM) the composition is skewed to basic and acidic residues.

It is found in the nucleus. The protein is Putative B3 domain-containing protein Os03g0619850 of Oryza sativa subsp. japonica (Rice).